The primary structure comprises 742 residues: F-box only protein 30 (742 aa).

The segment at 49 to 108 (EHRLLCPFERVPCLNSNFGCPFTLARNKVAEHLEMCPASVVCCTMEWNRWPVSYSDRKSY) adopts a TRAF-type zinc-finger fold. The tract at residues 214–242 (SLQGTTNEMDEESNRESSQDRNAKDQDHL) is disordered. Positions 225-242 (ESNRESSQDRNAKDQDHL) are enriched in basic and acidic residues. Ser-379 is subject to Phosphoserine. In terms of domain architecture, F-box spans 607-653 (SDHLSSLPFEVLQHIAGFLDGFSLCQLACVSRLMRDICGSLLQSRGM).

In terms of assembly, part of a SCF (SKP1-cullin-F-box) protein ligase complex. Interacts with SKP1, CUL1 and RBX1/ROC1. In terms of processing, auto-ubiquitinated. Post-translationally, may be neddylated. Neddylation may be required for E3 ligase activity.

It functions in the pathway protein modification; protein ubiquitination. In terms of biological role, substrate-recognition component of the SCF (SKP1-CUL1-F-box protein)-type E3 ubiquitin ligase complex. Required for muscle atrophy following denervation. The protein is F-box only protein 30 (Fbxo30) of Rattus norvegicus (Rat).